Here is an 827-residue protein sequence, read N- to C-terminus: Striatin homolog (827 aa).

A coiled-coil region spans residues 37–109; sequence RAHWISEKAE…VEEEEEEDDK (73 aa). Disordered stretches follow at residues 99–123, 181–270, 311–362, and 400–459; these read KVEE…SKDN, KDIN…QLQS, SSVS…DEQS, and EEGN…SELM. A compositionally biased stretch (basic and acidic residues) spans 109–123; the sequence is KIPKNREPPKKSKDN. 2 stretches are compositionally biased toward low complexity: residues 184–270 and 311–334; these read NNNN…QLQS and SSVS…TSKQ. Over residues 337–346 the composition is skewed to polar residues; that stretch reads EDPNNVTISK. Composition is skewed to low complexity over residues 347 to 356, 416 to 432, and 439 to 453; these read QQQQEQQQQQ, TPTT…STGS, and SSSS…NSNT. WD repeat units lie at residues 495–534, 548–593, 610–649, 709–748, 751–790, and 797–827; these read SHFD…PTKK, GHTG…IDSY, GHQD…QLYT, NNNS…VVHS, AHSN…CIQD, and KYDE…RILN.

This sequence belongs to the WD repeat striatin family. Part of the core of STRIPAK complexes.

Its subcellular location is the cytoplasm. The protein localises to the membrane. Functionally, calmodulin-binding scaffolding protein which is the center of the striatin-interacting phosphatase and kinase (STRIPAK) complexes. STRIPAK complexes have critical roles in protein (de)phosphorylation and are regulators of multiple signaling pathways including Hippo, MAPK, nuclear receptor and cytoskeleton remodeling. Different types of STRIPAK complexes are involved in a variety of biological processes such as cell growth, differentiation, apoptosis, metabolism and immune regulation. This chain is Striatin homolog (strn), found in Dictyostelium discoideum (Social amoeba).